The chain runs to 340 residues: Putative inactive cytochrome P450 family member 4Z2 (340 aa).

Topologically, residues 1–9 (MEPSWLQEL) are cytoplasmic. The chain crosses the membrane as a helical; Signal-anchor for type II membrane protein span at residues 10-30 (MAHPFLLLILLCMSLLLFQVI). The Lumenal segment spans residues 31 to 340 (RLYQRRRWTI…AKYPEHQQRC (310 aa)).

Belongs to the cytochrome P450 family. Heme is required as a cofactor. As to expression, detected at low levels in mammary gland and mammary carcinoma.

The protein localises to the membrane. The chain is Putative inactive cytochrome P450 family member 4Z2 (CYP4Z2P) from Homo sapiens (Human).